The following is a 583-amino-acid chain: SHC-transforming protein 1 (583 aa).

Position 1 is an N-acetylmethionine (M1). The interval 1 to 92 (MDLLPPKPKY…EPGRAADDGE (92 aa)) is disordered. Positions 16–44 (ESLSSLEEGASGSTPPEELPSPSASSLGP) are enriched in low complexity. Residues S36 and S139 each carry the phosphoserine modification. K154 is modified (N6-acetyllysine). A PID domain is found at 156-339 (MGPGVSYLVR…AGFDGSAWDE (184 aa)). Positions 340-487 (EEEEPPDHQY…SMAEQLRGEP (148 aa)) are CH1. Phosphotyrosine occurs at positions 349 and 350. The segment covering 372–384 (AAPGAARPTAPNA) has biased composition (low complexity). The interval 372-415 (AAPGAARPTAPNAQTPSHLGATLPVGQPVGGDPEVRKQMPPPPP) is disordered. Residue Y427 is modified to Phosphotyrosine. S453 bears the Phosphoserine mark. Residues 488–579 (WFHGKLSRRE…GSELCLQQPV (92 aa)) enclose the SH2 domain.

In terms of assembly, interacts with CPNE3; this interaction may mediate the binding of CPNE3 with ERBB2. Interacts with the NPXY motif of tyrosine-phosphorylated IGF1R and INSR in vitro via the PID domain. Once activated, binds to GRB2. Interacts with tyrosine-phosphorylated CD3T and DDR2. Interacts with the N-terminal region of SH2B2. Interacts with phosphorylated LRP1 and IRS4. Interacts with INPP5D/SHIP1 and INPPL1/SHIP2. Interacts with TRIM31. Interacts with PTPN6/SHP (tyrosine phosphorylated). Identified in a complex containing FGFR4, NCAM1, CDH2, PLCG1, FRS2, SRC, SHC1, GAP43 and CTT. Interacts with ALK, GAB2, GRB7 and KIT. Interacts with FLT4 (tyrosine-phosphorylated). Interacts with EPHB1 and GRB2; activates the MAPK/ERK cascade to regulate cell migration. Interacts with PDGFRB (tyrosine-phosphorylated). Interacts with ERBB4. Interacts with TEK/TIE2 (tyrosine-phosphorylated). Interacts with the Trk receptors NTRK1, NTRK2 and NTRK3; in a phosphotyrosine-dependent manner. Interacts with PTK2/FAK1. Interacts with CEACAM1; this interaction is CEACAM1-phosphorylation-dependent and mediates interaction with EGFR or INSR resulting in decrease coupling of SHC1 to the MAPK3/ERK1-MAPK1/ERK2 pathway. Interacts (via PID domain) with PEAK1 (when phosphorylated at 'Tyr-1188'). Found in a complex with PPP1CA, PPP1CC, SHC1 and PEAK1. As to quaternary structure, (Microbial infection) Interacts with herpes simplex virus 1 UL46. In terms of processing, phosphorylated by activated epidermal growth factor receptor. Phosphorylated in response to FLT4 and KIT signaling. Isoform p46Shc and isoform p52Shc are phosphorylated on tyrosine residues of the Pro-rich domain. Isoform p66Shc is phosphorylated on Ser-36 by PRKCB upon treatment with insulin, hydrogen peroxide or irradiation with ultraviolet light. Tyrosine phosphorylated in response to FLT3 signaling. Tyrosine phosphorylated by activated PTK2B/PYK2. Tyrosine phosphorylated by ligand-activated ALK. Tyrosine phosphorylated by ligand-activated PDGFRB. Tyrosine phosphorylated by TEK/TIE2. May be tyrosine phosphorylated by activated PTK2/FAK1; tyrosine phosphorylation was seen in an astrocytoma biopsy, where PTK2/FAK1 kinase activity is high, but not in normal brain tissue. Isoform p52Shc dephosphorylation by PTPN2 may regulate interaction with GRB2. In terms of tissue distribution, widely expressed. Expressed in neural stem cells but absent in mature neurons.

The protein localises to the cytoplasm. It localises to the cell junction. Its subcellular location is the focal adhesion. The protein resides in the mitochondrion matrix. It is found in the mitochondrion. Signaling adapter that couples activated growth factor receptors to signaling pathways. Participates in a signaling cascade initiated by activated KIT and KITLG/SCF. Isoform p46Shc and isoform p52Shc, once phosphorylated, couple activated receptor tyrosine kinases to Ras via the recruitment of the GRB2/SOS complex and are implicated in the cytoplasmic propagation of mitogenic signals. Isoform p46Shc and isoform p52Shc may thus function as initiators of the Ras signaling cascade in various non-neuronal systems. Isoform p66Shc does not mediate Ras activation, but is involved in signal transduction pathways that regulate the cellular response to oxidative stress and life span. Isoform p66Shc acts as a downstream target of the tumor suppressor p53 and is indispensable for the ability of stress-activated p53 to induce elevation of intracellular oxidants, cytochrome c release and apoptosis. The expression of isoform p66Shc has been correlated with life span. Participates in signaling downstream of the angiopoietin receptor TEK/TIE2, and plays a role in the regulation of endothelial cell migration and sprouting angiogenesis. This Homo sapiens (Human) protein is SHC-transforming protein 1 (SHC1).